The following is a 301-amino-acid chain: Protoheme IX farnesyltransferase (301 aa).

The next 8 membrane-spanning stretches (helical) occupy residues 30-50 (VISL…PKAI), 55-75 (IIVS…GGMI), 106-126 (AYAI…LANP), 127-147 (LTAL…SIWL), 152-172 (WWNI…GFAA), 177-197 (FTLL…GHFW), 233-253 (ALMV…YLIV), and 281-301 (FKLS…VKLI).

The protein belongs to the UbiA prenyltransferase family. Protoheme IX farnesyltransferase subfamily.

The protein resides in the cell membrane. It carries out the reaction heme b + (2E,6E)-farnesyl diphosphate + H2O = Fe(II)-heme o + diphosphate. Its pathway is porphyrin-containing compound metabolism; heme O biosynthesis; heme O from protoheme: step 1/1. Its function is as follows. Converts heme B (protoheme IX) to heme O by substitution of the vinyl group on carbon 2 of heme B porphyrin ring with a hydroxyethyl farnesyl side group. This chain is Protoheme IX farnesyltransferase, found in Sulfurisphaera tokodaii (strain DSM 16993 / JCM 10545 / NBRC 100140 / 7) (Sulfolobus tokodaii).